The following is a 49-amino-acid chain: uncharacterized protein (49 aa).

The chain crosses the membrane as a helical span at residues 22–42; sequence AIVGISIMIIIAIGIYLIIEY.

It localises to the membrane. This is an uncharacterized protein from Methanocaldococcus jannaschii (strain ATCC 43067 / DSM 2661 / JAL-1 / JCM 10045 / NBRC 100440) (Methanococcus jannaschii).